A 500-amino-acid polypeptide reads, in one-letter code: Proline/betaine transporter (500 aa).

Residues 1–37 are Cytoplasmic-facing; the sequence is MLKRKKIKPITLGDVTIIDDGKLRKAITAASLGNAME. A helical membrane pass occupies residues 38–58; sequence WFDFGVYGFVAYALGKVFFPG. Topologically, residues 59–65 are periplasmic; it reads ADPSVQM. The chain crosses the membrane as a helical span at residues 66 to 86; the sequence is IAALATFSVPFLIRPLGGLFF. Residues 87-97 lie on the Cytoplasmic side of the membrane; sequence GMLGDKYGRQK. The helical transmembrane segment at 98 to 118 threads the bilayer; the sequence is ILAITIVIMSISTFCIGLIPS. Residues 119–121 lie on the Periplasmic side of the membrane; it reads YAT. Residues 122–142 traverse the membrane as a helical segment; sequence IGIWAPILLLLCKMAQGFSVG. Over 143–169 the chain is Cytoplasmic; sequence GEYTGASIFVAEYSPDRKRGFMGSWLD. Residues 170–190 traverse the membrane as a helical segment; that stretch reads FGSIAGFVLGAGVVVLISTIV. Residues 191–194 are Periplasmic-facing; it reads GEEN. The helical transmembrane segment at 195-215 threads the bilayer; that stretch reads FLEWGWRIPFFIALPLGIIGL. Over 216–260 the chain is Cytoplasmic; the sequence is YLRHALEETPAFQQHVDKLEQGDREGLQDGPKVSFKEIATKHWRS. Residues 261 to 281 traverse the membrane as a helical segment; sequence LLSCIGLVIATNVTYYMLLTY. Residues 282–297 are Periplasmic-facing; that stretch reads MPSYLSHNLHYSEDHG. The helical transmembrane segment at 298 to 318 threads the bilayer; it reads VLIIIAIMIGMLFVQPVMGLL. Topologically, residues 319 to 325 are cytoplasmic; sequence SDRFGRR. Residues 326–346 traverse the membrane as a helical segment; it reads PFVIMGSIALFALAIPAFILI. The Periplasmic segment spans residues 347–350; the sequence is NSNV. A helical transmembrane segment spans residues 351-371; sequence IGLIFAGLLMLAVILNCFTGV. The Cytoplasmic segment spans residues 372–390; the sequence is MASTLPAMFPTHIRYSALA. Residues 391-411 form a helical membrane-spanning segment; sequence AAFNISVLIAGLTPTLAAWLV. Topologically, residues 412-416 are periplasmic; that stretch reads ESSQD. The helical transmembrane segment at 417-437 threads the bilayer; sequence LMMPAYYLMVIAVIGLITGIS. At 438–500 the chain is on the cytoplasmic side; it reads MKETANRPLK…LVQQHPRIDE (63 aa). Residues 453-498 are a coiled coil; that stretch reads ASDIQEAKEILGEHYDNIEQKIDDIDQEIAELQVKRSRLVQQHPRI.

This sequence belongs to the major facilitator superfamily. Metabolite:H+ Symporter (MHS) family (TC 2.A.1.6) family.

It is found in the cell inner membrane. Its function is as follows. Proton symporter that senses osmotic shifts and responds by importing osmolytes such as proline, glycine betaine, stachydrine, pipecolic acid, ectoine and taurine. It is both an osmosensor and an osmoregulator which is available to participate early in the bacterial osmoregulatory response. In Salmonella typhimurium (strain LT2 / SGSC1412 / ATCC 700720), this protein is Proline/betaine transporter (proP).